The following is a 552-amino-acid chain: MGKIAEFLGNPGARPDVHHRAPTVDCKQYEEFGDSNDYKNDDVVRVVSHSDESTDDELCNVNLTETGAIFTSKGFTGLSKGFTDKTLDFLVRVAGSQAVFFIVWIILIIWVVIGIVYNAPFNWQVVMQDGQSIQSYVWDTLLMRQQLMSTHEQILICGRLKSRLASFKNYLTRSTPEEEKADCTVEANEVSSVENHIDPSAINGELPVENWYDRLSNVASRYMGSIAAMVIFWIGIFVWIGCGAIPKDAGNTPPYTGETTGSNPRLKKFSDAWQMYINTAVAVSLLICTTFLQNIRARHDYFTGRFLVDIFDMDEKIDYRIRKHFNDFETPHPVVTIESKKRSTGRKMIDWYADIIGTGIGVLIGVAVFATWIGIGSPMKWDDNWWLIIGTYTGLIGFLDGFVLREVYFRIVQHEEKNYSDVAKEDLELFQELGIECPEEFSGKAPEINTIGYRTSQYINRICSTPWSVLVSVIIIIGLICIASGLRWSTTGQLIANTPTMIIEEFFLLVLLQAHNWADRQRRVEVTALYARRRILLSYVEKRFPEVMMLEK.

Topologically, residues 1–97 (MGKIAEFLGN…DFLVRVAGSQ (97 aa)) are extracellular. A Glycyl lysine isopeptide (Lys-Gly) (interchain with G-Cter in ubiquitin) cross-link involves residue Lys39. Phosphoserine occurs at positions 48 and 50. A helical membrane pass occupies residues 98-118 (AVFFIVWIILIIWVVIGIVYN). Residues 119-225 (APFNWQVVMQ…SNVASRYMGS (107 aa)) lie on the Cytoplasmic side of the membrane. A helical transmembrane segment spans residues 226–246 (IAAMVIFWIGIFVWIGCGAIP). The Extracellular segment spans residues 247–271 (KDAGNTPPYTGETTGSNPRLKKFSD). A helical membrane pass occupies residues 272–292 (AWQMYINTAVAVSLLICTTFL). The Cytoplasmic portion of the chain corresponds to 293–354 (QNIRARHDYF…GRKMIDWYAD (62 aa)). The helical transmembrane segment at 355-375 (IIGTGIGVLIGVAVFATWIGI) threads the bilayer. Over 376–383 (GSPMKWDD) the chain is Extracellular. A helical membrane pass occupies residues 384 to 404 (NWWLIIGTYTGLIGFLDGFVL). The Cytoplasmic segment spans residues 405 to 465 (REVYFRIVQH…SQYINRICST (61 aa)). A helical membrane pass occupies residues 466 to 486 (PWSVLVSVIIIIGLICIASGL). Residues 487–493 (RWSTTGQ) are Extracellular-facing. The chain crosses the membrane as a helical span at residues 494-514 (LIANTPTMIIEEFFLLVLLQA). Residues 515–552 (HNWADRQRRVEVTALYARRRILLSYVEKRFPEVMMLEK) lie on the Cytoplasmic side of the membrane.

Belongs to the FET4 family.

Its subcellular location is the membrane. Required for Fe(2+) ion low affinity uptake. This chain is Low-affinity Fe(2+) transport protein (FET4), found in Saccharomyces cerevisiae (strain ATCC 204508 / S288c) (Baker's yeast).